The primary structure comprises 675 residues: Protein PALS1 (675 aa).

2 disordered regions span residues M1–H32 and R52–L79. Residues M1 to E345 are required for the correct localization of PALS1 and PATJ at cell-cell contacts and the normal formation of tight junctions and adherens junctions. Phosphoserine occurs at positions 14 and 25. The interaction with PARD6B stretch occupies residues L21 to D140. Residues A54 to L79 show a composition bias toward basic and acidic residues. Phosphoserine is present on residues S83 and S84. L27 domains are found at residues K120–S177 and P179–E235. The tract at residues P181–Y243 is interaction with LIN7C. One can recognise a PDZ domain in the interval I256 to Q336. The SH3 domain occupies E345–E417. A Guanylate kinase-like domain is found at K479–N660. G486–N493 is a binding site for ATP.

Belongs to the MAGUK family. As to quaternary structure, heterodimer with MPP1. Forms a heterotrimeric complex composed of PALS1, LIN7B and PATJ; the N-terminal L27 domain of PALS1 interacts with the L27 domain of PATJ and the C-terminal L27 domain of PALS1 interacts with the L27 domain of LIN7B. Component of a complex composed of PALS1, CRB1 and MPP4. Component of a complex whose core is composed of ARHGAP17, AMOT, PALS1, PATJ and PARD3/PAR3. Component of a complex composed of PALS1, CRB1 and EPB41L5. Within the complex, interacts (via HOOK domain) with EPB41L5 (via FERM domain), and interacts with CRB1 (via intracellular domain). Component of a complex composed of PALS1, MPP3 and CRB1; PALS1 acts as a bridging protein between MPP3 (via guanylate kinase-like domain) and CRB1. Component of a complex composed of CRB3, PALS1 and PATJ. As part of the Crumbs complex; interacts with WWP1, the interaction is enhanced by AMOTL2 and facilitates WWP1 localization to the plasma membrane. The Crumbs complex promotes monoubiquitination of AMOTL2 by WWP1, which activates the Hippo signaling pathway. Interacts (via PDZ domain) with PATJ (via N-terminus). Interacts with EZR. Interacts (via PDZ domain) with CRB1 (via C-terminal ERLI motif). While the PDZ domain is sufficient for interaction with CRB1, the adjacent SH3 and guanylate kinase-like domains are likely to contribute to a high affinity interaction. Interacts with WWTR1/TAZ (via WW domain). Interacts with MPP7. Interacts (via PDZ domain) with CRB3 (via C-terminus). Interacts with LIN7C. Interacts with MPDZ. Interacts with PARD6B. Interacts with SC6A1. Interacts with CDH5; the interaction promotes PALS1 localization to cell junctions and is required for CDH5-mediated vascular lumen formation and endothelial cell. Interacts with NPHP1 (via coiled coil and SH3 domains). Interacts with NPHP4. Interacts with CRB2.

Its subcellular location is the golgi apparatus. The protein resides in the cell membrane. It is found in the endomembrane system. It localises to the cell junction. The protein localises to the tight junction. Its subcellular location is the adherens junction. The protein resides in the cell projection. It is found in the axon. It localises to the perikaryon. The protein localises to the apical cell membrane. Plays a role in tight junction biogenesis and in the establishment of cell polarity in epithelial cells. Also involved in adherens junction biogenesis by ensuring correct localization of the exocyst complex protein EXOC4/SEC8 which allows trafficking of adherens junction structural component CDH1 to the cell surface. Plays a role through its interaction with CDH5 in vascular lumen formation and endothelial membrane polarity. Required during embryonic and postnatal retinal development. Required for the maintenance of cerebellar progenitor cells in an undifferentiated proliferative state, preventing premature differentiation, and is required for cerebellar histogenesis, fissure formation, cerebellar layer organization and cortical development. Plays a role in neuronal progenitor cell survival, potentially via promotion of mTOR signaling. Plays a role in the radial and longitudinal extension of the myelin sheath in Schwann cells. May modulate SC6A1/GAT1-mediated GABA uptake by stabilizing the transporter. May play a role in the T-cell receptor-mediated activation of NF-kappa-B. Required for localization of EZR to the apical membrane of parietal cells and may play a role in the dynamic remodeling of the apical cytoskeleton. Required for the normal polarized localization of the vesicular marker STX4. Required for the correct trafficking of the myelin proteins PMP22 and MAG. Involved in promoting phosphorylation and cytoplasmic retention of transcriptional coactivators YAP1 and WWTR1/TAZ which leads to suppression of TGFB1-dependent transcription of target genes such as CCN2/CTGF, SERPINE1/PAI1, SNAI1/SNAIL1 and SMAD7. The chain is Protein PALS1 from Rattus norvegicus (Rat).